Reading from the N-terminus, the 361-residue chain is Phospho-N-acetylmuramoyl-pentapeptide-transferase (361 aa).

The next 10 helical transmembrane spans lie at 25–45 (RTVL…PAMI), 73–93 (TMGG…WADL), 97–117 (YVWI…VDDY), 134–154 (LFWQ…TAEL), 168–188 (VAVP…IVGT), 200–220 (GLAI…SYVA), 237–257 (AGEL…FLWF), 264–284 (VFMG…VTVI), 289–309 (IVML…MLQV), and 338–358 (QVVV…LSSL).

It belongs to the glycosyltransferase 4 family. MraY subfamily. Requires Mg(2+) as cofactor.

The protein resides in the cell inner membrane. It carries out the reaction UDP-N-acetyl-alpha-D-muramoyl-L-alanyl-gamma-D-glutamyl-meso-2,6-diaminopimeloyl-D-alanyl-D-alanine + di-trans,octa-cis-undecaprenyl phosphate = di-trans,octa-cis-undecaprenyl diphospho-N-acetyl-alpha-D-muramoyl-L-alanyl-D-glutamyl-meso-2,6-diaminopimeloyl-D-alanyl-D-alanine + UMP. It participates in cell wall biogenesis; peptidoglycan biosynthesis. Functionally, catalyzes the initial step of the lipid cycle reactions in the biosynthesis of the cell wall peptidoglycan: transfers peptidoglycan precursor phospho-MurNAc-pentapeptide from UDP-MurNAc-pentapeptide onto the lipid carrier undecaprenyl phosphate, yielding undecaprenyl-pyrophosphoryl-MurNAc-pentapeptide, known as lipid I. This is Phospho-N-acetylmuramoyl-pentapeptide-transferase from Nitrosospira multiformis (strain ATCC 25196 / NCIMB 11849 / C 71).